A 293-amino-acid chain; its full sequence is MTIETLSTQSKAQVLAEALPWLKQLHGRVVVIKYGGNAMTDDTLRQAFAADMAFLRNCGIHPVVVHGGGPQITAMLGKLGIEGDFKGGFRVTTPEVLDVARMVLFGQVGRELVNLINAHGPYAVGVTGEDAQLFTAVRRSVNVDGVATDIGLVGDVDHVNAAALMDLIAAHRIPVISTLAPDAEGVVHNINADTAAAALAEALGAEKLLMLTDVEGLYTSWPERDSLVREIDTAALEQLLPRLEAGMIPKVEACLRAVTGGVPSAHVIDGRVEHCVLVELFTNAGTGTKVVSA.

Residues 68-69 (GG), R90, and N189 each bind substrate.

This sequence belongs to the acetylglutamate kinase family. ArgB subfamily.

Its subcellular location is the cytoplasm. It catalyses the reaction N-acetyl-L-glutamate + ATP = N-acetyl-L-glutamyl 5-phosphate + ADP. Its pathway is amino-acid biosynthesis; L-arginine biosynthesis; N(2)-acetyl-L-ornithine from L-glutamate: step 2/4. Catalyzes the ATP-dependent phosphorylation of N-acetyl-L-glutamate. This chain is Acetylglutamate kinase, found in Mycobacterium marinum (strain ATCC BAA-535 / M).